The chain runs to 287 residues: Large ribosomal subunit protein uL2 (287 aa).

The segment at 221-287 is disordered; sequence RGSVMNPCDH…SKRSRGGRDS (67 aa). A compositionally biased stretch (basic residues) spans 258–287; that stretch reads KTRKKNKPSNKLVVRRRRRISKRSRGGRDS.

It belongs to the universal ribosomal protein uL2 family. Part of the 50S ribosomal subunit. Forms a bridge to the 30S subunit in the 70S ribosome.

In terms of biological role, one of the primary rRNA binding proteins. Required for association of the 30S and 50S subunits to form the 70S ribosome, for tRNA binding and peptide bond formation. It has been suggested to have peptidyltransferase activity; this is somewhat controversial. Makes several contacts with the 16S rRNA in the 70S ribosome. The chain is Large ribosomal subunit protein uL2 from Prochlorococcus marinus (strain MIT 9215).